Here is an 89-residue protein sequence, read N- to C-terminus: Large ribosomal subunit protein eL37A (89 aa).

Zn(2+) contacts are provided by Cys-19, Cys-22, Cys-34, and Cys-37. Residues 19 to 37 (CRRCGKRSFHIQKSTCACC) form a C4-type zinc finger.

The protein belongs to the eukaryotic ribosomal protein eL37 family. Component of the large ribosomal subunit (LSU). Mature yeast ribosomes consist of a small (40S) and a large (60S) subunit. The 40S small subunit contains 1 molecule of ribosomal RNA (18S rRNA) and at least 33 different proteins. The large 60S subunit contains 3 rRNA molecules (25S, 5.8S and 5S rRNA) and at least 46 different proteins. Zn(2+) serves as cofactor.

The protein resides in the cytoplasm. Component of the ribosome, a large ribonucleoprotein complex responsible for the synthesis of proteins in the cell. The small ribosomal subunit (SSU) binds messenger RNAs (mRNAs) and translates the encoded message by selecting cognate aminoacyl-transfer RNA (tRNA) molecules. The large subunit (LSU) contains the ribosomal catalytic site termed the peptidyl transferase center (PTC), which catalyzes the formation of peptide bonds, thereby polymerizing the amino acids delivered by tRNAs into a polypeptide chain. The nascent polypeptides leave the ribosome through a tunnel in the LSU and interact with protein factors that function in enzymatic processing, targeting, and the membrane insertion of nascent chains at the exit of the ribosomal tunnel. This Schizosaccharomyces pombe (strain 972 / ATCC 24843) (Fission yeast) protein is Large ribosomal subunit protein eL37A (rpl3703).